The following is a 341-amino-acid chain: Tryptophan--tRNA ligase (341 aa).

ATP is bound by residues 11–13 (RPT) and 19–20 (GH). The 'HIGH' region motif lies at 12–20 (PTGKLHIGH). Asp140 is a binding site for L-tryptophan. ATP-binding positions include 152 to 154 (GND), Leu194, and 202 to 206 (KMSKS). Residues 202-206 (KMSKS) carry the 'KMSKS' region motif.

It belongs to the class-I aminoacyl-tRNA synthetase family. In terms of assembly, homodimer.

It is found in the cytoplasm. It catalyses the reaction tRNA(Trp) + L-tryptophan + ATP = L-tryptophyl-tRNA(Trp) + AMP + diphosphate + H(+). Catalyzes the attachment of tryptophan to tRNA(Trp). The sequence is that of Tryptophan--tRNA ligase from Lactococcus lactis subsp. lactis (strain IL1403) (Streptococcus lactis).